The sequence spans 219 residues: Probable N-acetyltransferase camello (219 aa).

The next 2 helical transmembrane spans lie at 44–64 (FITFVAFTSVFMGTGSYVLAL) and 66–86 (SLVALLAAGWYGLYSEFHGLA). The 150-residue stretch at 62–211 (LALTSLVALL…VHQYTSFTVA (150 aa)) folds into the N-acetyltransferase domain.

It belongs to the camello family.

It localises to the golgi apparatus membrane. Plays a role in regulation of gastrulation, possibly by controlled reduction of cell adhesion in the periblastopore region which is necessary for optimal cell motility. The polypeptide is Probable N-acetyltransferase camello (Xenopus tropicalis (Western clawed frog)).